A 128-amino-acid polypeptide reads, in one-letter code: Large ribosomal subunit protein bL17 (128 aa).

It belongs to the bacterial ribosomal protein bL17 family. Part of the 50S ribosomal subunit. Contacts protein L32.

This chain is Large ribosomal subunit protein bL17, found in Erwinia tasmaniensis (strain DSM 17950 / CFBP 7177 / CIP 109463 / NCPPB 4357 / Et1/99).